Here is a 73-residue protein sequence, read N- to C-terminus: Gastricsin (73 aa).

A propeptide spans 1-43 (activation peptide); it reads SVIKVPLKKLKSIRQAMKEKGLLEEFLKTHKYDPAQRYRIGDI. A Peptidase A1 domain is found at 57-73; the sequence is YFGEISIGTPPQNFLVL.

This sequence belongs to the peptidase A1 family.

Its subcellular location is the secreted. It catalyses the reaction More restricted specificity than pepsin A, but shows preferential cleavage at Tyr-|-Xaa bonds. High activity on hemoglobin.. Functionally, hydrolyzes a variety of proteins. This chain is Gastricsin (PGC), found in Sus scrofa (Pig).